The chain runs to 279 residues: Coiled-coil domain-containing protein 117 (279 aa).

Residues 1–82 are disordered; it reads MAALGRPFSG…REEEEDDDCP (82 aa). R48 carries the post-translational modification Omega-N-methylarginine. At S53 the chain carries Phosphoserine. The span at 63–72 shows a compositional bias: basic residues; that stretch reads VSVHCKKKHK. Residues 141–168 adopt a coiled-coil conformation; the sequence is QCEVARRKLQEIEDRIIDEDEEVEADRN. Residues 217 to 279 are disordered; sequence LLSDKPKPSS…ATSTEEEMEL (63 aa). Polar residues-rich tracts occupy residues 224–235 and 262–272; these read PSSNTKNYTGES and SLYNSLETATS.

As to quaternary structure, interacts with CIAO2B; the interaction is direct. Interacts with MMS19; the interaction is indirect.

It is found in the cytoplasm. Its subcellular location is the cytoskeleton. It localises to the spindle. The protein resides in the nucleus. Functionally, facilitates DNA repair, cell cycle progression, and cell proliferation through its interaction with CIAO2B. The polypeptide is Coiled-coil domain-containing protein 117 (Homo sapiens (Human)).